A 105-amino-acid chain; its full sequence is uncharacterized protein (105 aa).

The next 2 membrane-spanning stretches (helical) occupy residues 26–46 and 66–86; these read NVLI…CIAI and SALA…TLAI.

The protein resides in the cell membrane. This is an uncharacterized protein from Mycoplasma pneumoniae (strain ATCC 29342 / M129 / Subtype 1) (Mycoplasmoides pneumoniae).